The following is a 479-amino-acid chain: Adenosylhomocysteinase (479 aa).

Threonine 56, aspartate 134, and glutamate 200 together coordinate substrate. An NAD(+)-binding site is contributed by 201 to 203; the sequence is TTT. Substrate contacts are provided by lysine 230 and aspartate 234. Residues asparagine 235, 264 to 269, glutamate 287, asparagine 322, 343 to 345, and asparagine 391 each bind NAD(+); these read GYGDVG and IGH.

The protein belongs to the adenosylhomocysteinase family. In terms of assembly, homotetramer. Requires NAD(+) as cofactor.

It catalyses the reaction S-adenosyl-L-homocysteine + H2O = L-homocysteine + adenosine. It participates in amino-acid biosynthesis; L-homocysteine biosynthesis; L-homocysteine from S-adenosyl-L-homocysteine: step 1/1. In terms of biological role, adenosylhomocysteine is a competitive inhibitor of S-adenosyl-L-methionine-dependent methyl transferase reactions; therefore adenosylhomocysteinase may play a key role in the control of methylations via regulation of the intracellular concentration of adenosylhomocysteine. The protein is Adenosylhomocysteinase of Plasmodium falciparum (isolate 3D7).